The following is a 355-amino-acid chain: Probable tRNA-dihydrouridine synthase 1 (355 aa).

FMN-binding positions include 48-50 (PLS) and glutamine 102. Cysteine 132 acts as the Proton donor in catalysis. FMN contacts are provided by residues lysine 171, 232 to 234 (NGD), and 256 to 257 (SR).

It belongs to the Dus family. Requires FMN as cofactor.

It carries out the reaction a 5,6-dihydrouridine in tRNA + NAD(+) = a uridine in tRNA + NADH + H(+). It catalyses the reaction a 5,6-dihydrouridine in tRNA + NADP(+) = a uridine in tRNA + NADPH + H(+). Functionally, catalyzes the synthesis of 5,6-dihydrouridine (D), a modified base found in the D-loop of most tRNAs, via the reduction of the C5-C6 double bond in target uridines. This chain is Probable tRNA-dihydrouridine synthase 1 (dus1), found in Synechocystis sp. (strain ATCC 27184 / PCC 6803 / Kazusa).